Reading from the N-terminus, the 230-residue chain is UPF0702 transmembrane protein YcaP (230 aa).

3 helical membrane passes run 16–36 (FDFL…VFLF), 48–68 (MSLF…DVAF), and 75–95 (VPVL…MWLM).

The protein belongs to the UPF0702 family.

The protein localises to the cell membrane. The sequence is that of UPF0702 transmembrane protein YcaP (ycaP) from Escherichia coli (strain K12).